The following is a 357-amino-acid chain: Anthranilate phosphoribosyltransferase (357 aa).

5-phospho-alpha-D-ribose 1-diphosphate contacts are provided by residues glycine 91, 94 to 95 (GD), threonine 99, 101 to 104 (NIST), 119 to 127 (KHGNRSVSS), and serine 131. An anthranilate-binding site is contributed by glycine 91. Mg(2+) is bound at residue serine 103. An anthranilate-binding site is contributed by asparagine 122. Arginine 177 is an anthranilate binding site. Aspartate 235 and glutamate 236 together coordinate Mg(2+).

Belongs to the anthranilate phosphoribosyltransferase family. Homodimer. Mg(2+) serves as cofactor.

It catalyses the reaction N-(5-phospho-beta-D-ribosyl)anthranilate + diphosphate = 5-phospho-alpha-D-ribose 1-diphosphate + anthranilate. It participates in amino-acid biosynthesis; L-tryptophan biosynthesis; L-tryptophan from chorismate: step 2/5. Catalyzes the transfer of the phosphoribosyl group of 5-phosphorylribose-1-pyrophosphate (PRPP) to anthranilate to yield N-(5'-phosphoribosyl)-anthranilate (PRA). This Shewanella baltica (strain OS155 / ATCC BAA-1091) protein is Anthranilate phosphoribosyltransferase.